Consider the following 127-residue polypeptide: Large ribosomal subunit protein bL17 (127 aa).

This sequence belongs to the bacterial ribosomal protein bL17 family. Part of the 50S ribosomal subunit. Contacts protein L32.

This is Large ribosomal subunit protein bL17 from Actinobacillus pleuropneumoniae serotype 7 (strain AP76).